A 545-amino-acid polypeptide reads, in one-letter code: Putative transcription factor ecdB (545 aa).

A DNA-binding region (zn(2)-C6 fungal-type) is located at residues Cys12–Cys39. Residues Pro79 to Asp99 are disordered.

It is found in the nucleus. The polypeptide is Putative transcription factor ecdB (Aspergillus rugulosus (Emericella rugulosa)).